A 340-amino-acid polypeptide reads, in one-letter code: Phenylalanine--tRNA ligase alpha subunit (340 aa).

Glu251 contributes to the Mg(2+) binding site.

Belongs to the class-II aminoacyl-tRNA synthetase family. Phe-tRNA synthetase alpha subunit type 1 subfamily. Tetramer of two alpha and two beta subunits. Mg(2+) serves as cofactor.

The protein localises to the cytoplasm. It catalyses the reaction tRNA(Phe) + L-phenylalanine + ATP = L-phenylalanyl-tRNA(Phe) + AMP + diphosphate + H(+). The polypeptide is Phenylalanine--tRNA ligase alpha subunit (Porphyromonas gingivalis (strain ATCC 33277 / DSM 20709 / CIP 103683 / JCM 12257 / NCTC 11834 / 2561)).